A 367-amino-acid polypeptide reads, in one-letter code: ELAV-like protein 3 (367 aa).

RRM domains follow at residues 39 to 117, 125 to 205, and 284 to 362; these read TNLI…YARP, ANLY…FANN, and WCIF…FKTS.

This sequence belongs to the RRM elav family. In terms of assembly, interacts with MAP1B light chain LC1. As to expression, brain specific. Expressed in the hippocampus with expression in CA1, CA3 and dentate gyrus.

In terms of biological role, RNA-binding protein that binds to AU-rich element (ARE) sequences of target mRNAs, including VEGF mRNA. May also bind poly-A tracts via RRM 3. May be involved in neuronal differentiation and maintenance. Plays a role in the stabilization of GAP43 mRNA and in spatial learning. This chain is ELAV-like protein 3 (Elavl3), found in Mus musculus (Mouse).